An 81-amino-acid chain; its full sequence is N.vectensis toxin 4 (81 aa).

The first 20 residues, 1–20 (MRSSWMFVICFAMLILYTNG), serve as a signal peptide directing secretion. Disulfide bonds link Cys46–Cys75, Cys48–Cys70, and Cys63–Cys76.

As to expression, expressed in ectodermal gland cells. In adult female tissues, highly transcribed in mesenteries (gametes-producing tissue) and slightly transcribed in tentacles, pharynx and physa.

Has toxic effects on zebrafish larvae. It causes contractile paralysis and twitching of the tail within 30 minutes, followed by death within 40 minutes. Does not show any toxicity when injected into arthropods (cherry shrimps or grass shrimps). This chain is N.vectensis toxin 4, found in Nematostella vectensis (Starlet sea anemone).